The sequence spans 699 residues: Elongation factor G (699 aa).

The region spanning 8–288 is the tr-type G domain; that stretch reads EDYRNFGIMA…AVCEYLPSPL (281 aa). Residues 17–24, 86–90, and 140–143 each bind GTP; these read AHIDAGKT, DTPGH, and NKMD.

The protein belongs to the TRAFAC class translation factor GTPase superfamily. Classic translation factor GTPase family. EF-G/EF-2 subfamily.

The protein resides in the cytoplasm. Catalyzes the GTP-dependent ribosomal translocation step during translation elongation. During this step, the ribosome changes from the pre-translocational (PRE) to the post-translocational (POST) state as the newly formed A-site-bound peptidyl-tRNA and P-site-bound deacylated tRNA move to the P and E sites, respectively. Catalyzes the coordinated movement of the two tRNA molecules, the mRNA and conformational changes in the ribosome. The protein is Elongation factor G of Allorhizobium ampelinum (strain ATCC BAA-846 / DSM 112012 / S4) (Agrobacterium vitis (strain S4)).